The primary structure comprises 161 residues: Ribonuclease H (161 aa).

One can recognise an RNase H type-1 domain in the interval 1–142; it reads MLKLVKMFSD…CDKIARQSAQ (142 aa). Positions 10, 48, 70, and 134 each coordinate Mg(2+).

It belongs to the RNase H family. Monomer. Requires Mg(2+) as cofactor.

The protein resides in the cytoplasm. The enzyme catalyses Endonucleolytic cleavage to 5'-phosphomonoester.. Endonuclease that specifically degrades the RNA of RNA-DNA hybrids. This is Ribonuclease H (rnhA) from Buchnera aphidicola subsp. Schizaphis graminum (strain Sg).